A 303-amino-acid polypeptide reads, in one-letter code: tRNA dimethylallyltransferase (303 aa).

12–19 (GPTGVGKT) is a binding site for ATP. Residue 14–19 (TGVGKT) participates in substrate binding. Residues 37 to 40 (DSAQ) are interaction with substrate tRNA.

It belongs to the IPP transferase family. Monomer. The cofactor is Mg(2+).

It carries out the reaction adenosine(37) in tRNA + dimethylallyl diphosphate = N(6)-dimethylallyladenosine(37) in tRNA + diphosphate. Its function is as follows. Catalyzes the transfer of a dimethylallyl group onto the adenine at position 37 in tRNAs that read codons beginning with uridine, leading to the formation of N6-(dimethylallyl)adenosine (i(6)A). The chain is tRNA dimethylallyltransferase from Fusobacterium nucleatum subsp. nucleatum (strain ATCC 25586 / DSM 15643 / BCRC 10681 / CIP 101130 / JCM 8532 / KCTC 2640 / LMG 13131 / VPI 4355).